Here is a 513-residue protein sequence, read N- to C-terminus: Light-independent protochlorophyllide reductase subunit B (513 aa).

Aspartate 36 lines the [4Fe-4S] cluster pocket. The Proton donor role is filled by aspartate 299. 434–435 (GM) contacts substrate.

Belongs to the ChlB/BchB/BchZ family. As to quaternary structure, protochlorophyllide reductase is composed of three subunits; ChlL, ChlN and ChlB. Forms a heterotetramer of two ChlB and two ChlN subunits. It depends on [4Fe-4S] cluster as a cofactor.

It is found in the plastid. The protein localises to the chloroplast. The catalysed reaction is chlorophyllide a + oxidized 2[4Fe-4S]-[ferredoxin] + 2 ADP + 2 phosphate = protochlorophyllide a + reduced 2[4Fe-4S]-[ferredoxin] + 2 ATP + 2 H2O. Its pathway is porphyrin-containing compound metabolism; chlorophyll biosynthesis (light-independent). In terms of biological role, component of the dark-operative protochlorophyllide reductase (DPOR) that uses Mg-ATP and reduced ferredoxin to reduce ring D of protochlorophyllide (Pchlide) to form chlorophyllide a (Chlide). This reaction is light-independent. The NB-protein (ChlN-ChlB) is the catalytic component of the complex. This chain is Light-independent protochlorophyllide reductase subunit B, found in Anthoceros angustus (Hornwort).